Reading from the N-terminus, the 318-residue chain is Ubiquitin-like domain-containing CTD phosphatase 1 (318 aa).

Residue Ala2 is modified to N-acetylalanine. The Ubiquitin-like domain maps to 3-81 (LPIIVKWGGQ…IMMMGTREES (79 aa)). An N6-acetyllysine modification is found at Lys117. Positions 133 to 294 (PREGKKLLVL…LKLTQYLKEI (162 aa)) constitute an FCP1 homology domain. Mg(2+) is bound by residues Asp143, Asp145, and Asp253.

It depends on Mg(2+) as a cofactor.

The protein localises to the nucleus. The enzyme catalyses O-phospho-L-seryl-[protein] + H2O = L-seryl-[protein] + phosphate. It catalyses the reaction O-phospho-L-threonyl-[protein] + H2O = L-threonyl-[protein] + phosphate. In terms of biological role, dephosphorylates 26S nuclear proteasomes, thereby decreasing their proteolytic activity. Recruited to the 19S regulatory particle of the 26S proteasome through its interaction with 19S component PSMD2/RPN1. Once recruited, dephosphorylates 19S component PSMC2/RPT1 which impairs PSMC2 ATPase activity and disrupts 26S proteasome assembly. Has also been reported to stimulate the proteolytic activity of the 26S proteasome. The sequence is that of Ubiquitin-like domain-containing CTD phosphatase 1 (UBLCP1) from Bos taurus (Bovine).